A 281-amino-acid polypeptide reads, in one-letter code: 3-deoxy-manno-octulosonate cytidylyltransferase (281 aa).

This sequence belongs to the KdsB family.

The protein resides in the cytoplasm. It carries out the reaction 3-deoxy-alpha-D-manno-oct-2-ulosonate + CTP = CMP-3-deoxy-beta-D-manno-octulosonate + diphosphate. It functions in the pathway nucleotide-sugar biosynthesis; CMP-3-deoxy-D-manno-octulosonate biosynthesis; CMP-3-deoxy-D-manno-octulosonate from 3-deoxy-D-manno-octulosonate and CTP: step 1/1. It participates in bacterial outer membrane biogenesis; lipopolysaccharide biosynthesis. In terms of biological role, activates KDO (a required 8-carbon sugar) for incorporation into bacterial lipopolysaccharide in Gram-negative bacteria. In Xanthomonas campestris pv. campestris (strain B100), this protein is 3-deoxy-manno-octulosonate cytidylyltransferase.